A 602-amino-acid polypeptide reads, in one-letter code: Elongation factor 4 (602 aa).

The tr-type G domain occupies 7–188 (ENIRNFSIIA…SIIRLVPPPK (182 aa)). GTP-binding positions include 19 to 24 (DHGKST) and 135 to 138 (NKID).

Belongs to the TRAFAC class translation factor GTPase superfamily. Classic translation factor GTPase family. LepA subfamily.

Its subcellular location is the cell inner membrane. It carries out the reaction GTP + H2O = GDP + phosphate + H(+). Functionally, required for accurate and efficient protein synthesis under certain stress conditions. May act as a fidelity factor of the translation reaction, by catalyzing a one-codon backward translocation of tRNAs on improperly translocated ribosomes. Back-translocation proceeds from a post-translocation (POST) complex to a pre-translocation (PRE) complex, thus giving elongation factor G a second chance to translocate the tRNAs correctly. Binds to ribosomes in a GTP-dependent manner. In Chlamydia trachomatis serovar L2 (strain ATCC VR-902B / DSM 19102 / 434/Bu), this protein is Elongation factor 4.